Consider the following 315-residue polypeptide: Eukaryotic translation initiation factor 2 subunit 1 (315 aa).

Residues 17 to 88 form the S1 motif domain; that stretch reads EDVVMVNVRS…EKGYIDLSKR (72 aa). Phosphoserine is present on residues serine 49 and serine 52. A disordered region spans residues 292-315; it reads RLERENAEVDGDDDAEEMEAKTED. Acidic residues predominate over residues 299-308; that stretch reads EVDGDDDAEE.

The protein belongs to the eIF-2-alpha family. Eukaryotic translation initiation factor 2 eIF2 is a heterotrimeric complex composed of an alpha (EIF2S1), a beta (EIF2S2) and a gamma (EIF2S3) chain. In terms of processing, phosphorylation at Ser-49 and Ser-52 stabilizes the eIF-2/GDP/eIF2B complex and prevents GDP/GTP exchange reaction, thus impairing the recycling of eIF-2 between successive rounds of initiation and leading to global inhibition of translation, while concomitantly initiating the preferential translation of integrated stress response (ISR)-specific mRNAs.

The protein localises to the cytoplasm. Its subcellular location is the stress granule. It localises to the cytosol. Its activity is regulated as follows. Activity is regulated by phosphorylation at Ser-49 and Ser-52, which stabilizes the eIF2/GDP/eIF2B complex and prevents the eIF2B-mediated exchange of GDP for GTP, thereby preventing the formation of the 43S pre-initiation complex (43S PIC). This results in the global attenuation of 5' cap-dependent protein synthesis and concomitant translation of ISR-specific mRNAs that contain a short upstream open reading frame (uORF) in their 5' UTR. Its function is as follows. Member of the eIF2 complex that functions in the early steps of protein synthesis by forming a ternary complex with GTP and initiator tRNA. This complex binds to a 40S ribosomal subunit, followed by mRNA binding to form a 43S pre-initiation complex. Junction of the 60S ribosomal subunit to form the 80S initiation complex is preceded by hydrolysis of the GTP bound to eIF2 and release of an eIF2-GDP binary complex. In order for eIF2 to recycle and catalyze another round of initiation, the GDP bound to eIF2 must exchange with GTP by way of a reaction catalyzed by eIF2B. EIF2S1/eIF2-alpha is a key component of the integrated stress response (ISR), required for adaptation to various stress: phosphorylation by metabolic-stress sensing protein kinases (EIF2AK1/HRI, EIF2AK2/PKR, EIF2AK3/PERK and EIF2AK4/GCN2) in response to stress converts EIF2S1/eIF2-alpha in a global protein synthesis inhibitor, leading to a attenuation of cap-dependent translation, while concomitantly initiating the preferential translation of ISR-specific mRNAs, such as the transcriptional activators ATF4 and QRICH1. This Gallus gallus (Chicken) protein is Eukaryotic translation initiation factor 2 subunit 1 (EIF2S1).